A 247-amino-acid chain; its full sequence is 2,3-bisphosphoglycerate-dependent phosphoglycerate mutase (247 aa).

Residues 8–15, 21–22, arginine 60, 87–90, lysine 98, 114–115, and 183–184 contribute to the substrate site; these read RHGESQWN, TG, ERHY, RR, and GN. Histidine 9 serves as the catalytic Tele-phosphohistidine intermediate. Residue glutamate 87 is the Proton donor/acceptor of the active site.

Belongs to the phosphoglycerate mutase family. BPG-dependent PGAM subfamily.

It catalyses the reaction (2R)-2-phosphoglycerate = (2R)-3-phosphoglycerate. The protein operates within carbohydrate degradation; glycolysis; pyruvate from D-glyceraldehyde 3-phosphate: step 3/5. Catalyzes the interconversion of 2-phosphoglycerate and 3-phosphoglycerate. This chain is 2,3-bisphosphoglycerate-dependent phosphoglycerate mutase, found in Chlorobaculum tepidum (strain ATCC 49652 / DSM 12025 / NBRC 103806 / TLS) (Chlorobium tepidum).